A 68-amino-acid chain; its full sequence is MGYRVEADRDLCQGHAMCELEAPEYFRVPKRGQVEILDPEPPEEARGVIKHAVWACPTQALSIRETGE.

Cys-12, Gln-13, Ala-16, Cys-18, and Cys-56 together coordinate [3Fe-4S] cluster.

[3Fe-4S] cluster serves as cofactor.

Ferredoxin that is the redox partner of cytochrome CYP51, a sterol 14alpha-demethylase encoded by an adjacent gene. This Mycobacterium tuberculosis (strain ATCC 25618 / H37Rv) protein is Ferredoxin Fdx.